Consider the following 515-residue polypeptide: Bifunctional purine biosynthesis protein PurH (515 aa).

Residues 1 to 145 (MTKRALISVS…KNHASVTVVV (145 aa)) enclose the MGS-like domain.

The protein belongs to the PurH family.

The catalysed reaction is (6R)-10-formyltetrahydrofolate + 5-amino-1-(5-phospho-beta-D-ribosyl)imidazole-4-carboxamide = 5-formamido-1-(5-phospho-D-ribosyl)imidazole-4-carboxamide + (6S)-5,6,7,8-tetrahydrofolate. The enzyme catalyses IMP + H2O = 5-formamido-1-(5-phospho-D-ribosyl)imidazole-4-carboxamide. It participates in purine metabolism; IMP biosynthesis via de novo pathway; 5-formamido-1-(5-phospho-D-ribosyl)imidazole-4-carboxamide from 5-amino-1-(5-phospho-D-ribosyl)imidazole-4-carboxamide (10-formyl THF route): step 1/1. The protein operates within purine metabolism; IMP biosynthesis via de novo pathway; IMP from 5-formamido-1-(5-phospho-D-ribosyl)imidazole-4-carboxamide: step 1/1. The sequence is that of Bifunctional purine biosynthesis protein PurH from Streptococcus suis.